The following is a 173-amino-acid chain: NADH-ubiquinone oxidoreductase chain 6 (173 aa).

5 helical membrane-spanning segments follow: residues 1–21 (MTYF…AVAS), 27–47 (YGVV…LSLG), 48–68 (ASFV…VVFV), 87–107 (VIGY…IGGF), and 139–159 (WGAG…FVVL).

Belongs to the complex I subunit 6 family.

The protein localises to the mitochondrion membrane. The catalysed reaction is a ubiquinone + NADH + 5 H(+)(in) = a ubiquinol + NAD(+) + 4 H(+)(out). Core subunit of the mitochondrial membrane respiratory chain NADH dehydrogenase (Complex I) that is believed to belong to the minimal assembly required for catalysis. Complex I functions in the transfer of electrons from NADH to the respiratory chain. The immediate electron acceptor for the enzyme is believed to be ubiquinone. The polypeptide is NADH-ubiquinone oxidoreductase chain 6 (MT-ND6) (Brachyramphus brevirostris (Kittlitz's murrelet)).